Consider the following 65-residue polypeptide: Large ribosomal subunit protein uL29 (65 aa).

It belongs to the universal ribosomal protein uL29 family.

This is Large ribosomal subunit protein uL29 from Lactobacillus helveticus (strain DPC 4571).